A 247-amino-acid polypeptide reads, in one-letter code: TM2 domain-containing protein 3 (247 aa).

Positions 1-25 (MIPMMTLKRVCRVLLFITQMYVLSG) are cleaved as a signal peptide. The Extracellular segment spans residues 26–179 (RGFLSFEYSE…RTFPKMLYCN (154 aa)). N-linked (GlcNAc...) asparagine glycosylation is found at asparagine 87, asparagine 99, asparagine 139, asparagine 155, asparagine 169, and asparagine 179. A helical transmembrane segment spans residues 180–200 (WTGGYKWSTALALSITLGGFG). Positions 183–231 (GYKWSTALALSITLGGFGADRFYLGQWREGLGKLFSFGGLGIWTLIDVF) constitute a TM2 domain. The Cytoplasmic segment spans residues 201-215 (ADRFYLGQWREGLGK). Residues 216-236 (LFSFGGLGIWTLIDVFLISVG) traverse the membrane as a helical segment. At 237 to 247 (YVGPADGSLYI) the chain is on the extracellular side.

This sequence belongs to the TM2 family.

The protein localises to the membrane. This chain is TM2 domain-containing protein 3 (tm2d3), found in Xenopus tropicalis (Western clawed frog).